A 300-amino-acid polypeptide reads, in one-letter code: Acetylglutamate kinase (300 aa).

Residues 67–68 (GG), arginine 89, and asparagine 194 each bind substrate.

This sequence belongs to the acetylglutamate kinase family. ArgB subfamily.

It is found in the cytoplasm. The enzyme catalyses N-acetyl-L-glutamate + ATP = N-acetyl-L-glutamyl 5-phosphate + ADP. It participates in amino-acid biosynthesis; L-arginine biosynthesis; N(2)-acetyl-L-ornithine from L-glutamate: step 2/4. Functionally, catalyzes the ATP-dependent phosphorylation of N-acetyl-L-glutamate. In Saccharophagus degradans (strain 2-40 / ATCC 43961 / DSM 17024), this protein is Acetylglutamate kinase.